A 446-amino-acid chain; its full sequence is Chromosomal replication initiator protein DnaA (446 aa).

A domain I, interacts with DnaA modulators region spans residues 1–92 (MENISDLWNS…SQAEEEIDLP (92 aa)). A disordered region spans residues 87-107 (EEIDLPPSKPNSAQDDSNHLP). The tract at residues 93–109 (PSKPNSAQDDSNHLPQS) is domain II. Residues 96–107 (PNSAQDDSNHLP) show a composition bias toward polar residues. Positions 110–326 (MLNPKYTFDT…GALIRVVAYS (217 aa)) are domain III, AAA+ region. Positions 154, 156, 157, and 158 each coordinate ATP. A domain IV, binds dsDNA region spans residues 327–446 (SLINKDINAD…QVEEINDILK (120 aa)).

This sequence belongs to the DnaA family. As to quaternary structure, oligomerizes as a right-handed, spiral filament on DNA at oriC.

The protein resides in the cytoplasm. Plays an essential role in the initiation and regulation of chromosomal replication. ATP-DnaA binds to the origin of replication (oriC) to initiate formation of the DNA replication initiation complex once per cell cycle. Binds the DnaA box (a 9 base pair repeat at the origin) and separates the double-stranded (ds)DNA. Forms a right-handed helical filament on oriC DNA; dsDNA binds to the exterior of the filament while single-stranded (ss)DNA is stabiized in the filament's interior. The ATP-DnaA-oriC complex binds and stabilizes one strand of the AT-rich DNA unwinding element (DUE), permitting loading of DNA polymerase. After initiation quickly degrades to an ADP-DnaA complex that is not apt for DNA replication. Binds acidic phospholipids. This chain is Chromosomal replication initiator protein DnaA, found in Bacillus cereus (strain ATCC 10987 / NRS 248).